We begin with the raw amino-acid sequence, 480 residues long: Protein nucleotidyltransferase YdiU (480 aa).

Gly86, Gly88, Arg89, Lys109, Asp121, Gly122, Arg172, and Arg179 together coordinate ATP. Catalysis depends on Asp248, which acts as the Proton acceptor. Mg(2+) contacts are provided by Asn249 and Asp258. Asp258 lines the ATP pocket.

Belongs to the SELO family. It depends on Mg(2+) as a cofactor. Requires Mn(2+) as cofactor.

It carries out the reaction L-seryl-[protein] + ATP = 3-O-(5'-adenylyl)-L-seryl-[protein] + diphosphate. The catalysed reaction is L-threonyl-[protein] + ATP = 3-O-(5'-adenylyl)-L-threonyl-[protein] + diphosphate. The enzyme catalyses L-tyrosyl-[protein] + ATP = O-(5'-adenylyl)-L-tyrosyl-[protein] + diphosphate. It catalyses the reaction L-histidyl-[protein] + UTP = N(tele)-(5'-uridylyl)-L-histidyl-[protein] + diphosphate. It carries out the reaction L-seryl-[protein] + UTP = O-(5'-uridylyl)-L-seryl-[protein] + diphosphate. The catalysed reaction is L-tyrosyl-[protein] + UTP = O-(5'-uridylyl)-L-tyrosyl-[protein] + diphosphate. Functionally, nucleotidyltransferase involved in the post-translational modification of proteins. It can catalyze the addition of adenosine monophosphate (AMP) or uridine monophosphate (UMP) to a protein, resulting in modifications known as AMPylation and UMPylation. This chain is Protein nucleotidyltransferase YdiU, found in Klebsiella pneumoniae (strain 342).